Here is a 129-residue protein sequence, read N- to C-terminus: Small ribosomal subunit protein uS11 (129 aa).

Belongs to the universal ribosomal protein uS11 family. In terms of assembly, part of the 30S ribosomal subunit. Interacts with proteins S7 and S18. Binds to IF-3.

In terms of biological role, located on the platform of the 30S subunit, it bridges several disparate RNA helices of the 16S rRNA. Forms part of the Shine-Dalgarno cleft in the 70S ribosome. This chain is Small ribosomal subunit protein uS11, found in Aliivibrio fischeri (strain ATCC 700601 / ES114) (Vibrio fischeri).